The chain runs to 202 residues: Protein EMBRYO DEFECTIVE 514 (202 aa).

2 disordered regions span residues 1 to 69 (MAEE…PVKL) and 168 to 202 (MKTP…RFRR). The residue at position 2 (alanine 2) is an N-acetylalanine. 2 stretches are compositionally biased toward basic and acidic residues: residues 33-42 (ETGDEKRERE) and 51-65 (GESK…EKSG). The segment covering 174 to 202 (NGNGHGGGRGGGGGRRGGRGGGRGGRFRR) has biased composition (gly residues).

As to expression, expressed in leaves, flowers and embryos at globular stage.

It is found in the nucleus. In terms of biological role, may play a role in ribosome biogenesis and in determining the rate of cell division. Involved in a process essential for nuclear and nucleolar functions. This Arabidopsis thaliana (Mouse-ear cress) protein is Protein EMBRYO DEFECTIVE 514.